Here is a 66-residue protein sequence, read N- to C-terminus: UPF0337 protein spyM18_1212 (66 aa).

This sequence belongs to the UPF0337 (CsbD) family.

In Streptococcus pyogenes serotype M18 (strain MGAS8232), this protein is UPF0337 protein spyM18_1212.